The chain runs to 312 residues: Olfactory receptor 1J21 (312 aa).

The next 7 helical transmembrane spans lie at 29–49, 58–78, 95–115, 143–163, 197–217, 241–261, and 272–292; these read ALFL…ILLI, PMYF…SVTA, AGCV…NFLL, LLVM…TLLF, LVIL…ILVS, CGSH…LYFF, and VIVA…IYSL.

It belongs to the G-protein coupled receptor 1 family.

The protein resides in the cell membrane. In terms of biological role, odorant receptor. Activated by (+) and (-)-carvone. The protein is Olfactory receptor 1J21 of Mus musculus (Mouse).